The following is a 420-amino-acid chain: uncharacterized protein (420 aa).

6 consecutive transmembrane segments (helical) span residues 26-46, 66-86, 231-251, 276-296, 317-337, and 369-389; these read IFLL…QSVI, SAIK…WFTF, VILA…ATVL, IPVN…PSLL, GFLV…SIAF, and IDIL…FLTI.

Belongs to the CbiQ family.

The protein resides in the cell membrane. This is an uncharacterized protein from Mycoplasma genitalium (strain ATCC 33530 / DSM 19775 / NCTC 10195 / G37) (Mycoplasmoides genitalium).